The chain runs to 1485 residues: Chromosome partition protein MukB (1485 aa).

34–41 (GGNGAGKS) contributes to the ATP binding site. 2 coiled-coil regions span residues 337–480 (LNLV…QAYQ) and 509–605 (QHLA…PVWL). The tract at residues 666 to 783 (PSGAEDARLI…EVPLFGRAAR (118 aa)) is flexible hinge. 2 coiled-coil regions span residues 835–915 (EAEI…IQQH) and 977–1116 (GMLT…AKAG).

It belongs to the SMC family. MukB subfamily. Homodimerization via its hinge domain. Binds to DNA via its C-terminal region. Interacts, and probably forms a ternary complex, with MukE and MukF via its C-terminal region. The complex formation is stimulated by calcium or magnesium. Interacts with tubulin-related protein FtsZ.

It localises to the cytoplasm. It is found in the nucleoid. Plays a central role in chromosome condensation, segregation and cell cycle progression. Functions as a homodimer, which is essential for chromosome partition. Involved in negative DNA supercoiling in vivo, and by this means organize and compact chromosomes. May achieve or facilitate chromosome segregation by condensation DNA from both sides of a centrally located replisome during cell division. In Yersinia pseudotuberculosis serotype IB (strain PB1/+), this protein is Chromosome partition protein MukB.